Consider the following 129-residue polypeptide: Follitropin subunit beta (129 aa).

Residues 1–18 (MKSVQLCLLLWCWRAICC) form the signal peptide. Intrachain disulfides connect Cys-21–Cys-69, Cys-35–Cys-84, Cys-38–Cys-122, Cys-46–Cys-100, Cys-50–Cys-102, and Cys-105–Cys-112. N-linked (GlcNAc...) asparagine glycans are attached at residues Asn-25 and Asn-42.

This sequence belongs to the glycoprotein hormones subunit beta family. In terms of assembly, heterodimer. The active follitropin is a heterodimer composed of an alpha chain/CGA shared with other hormones and a unique beta chain/FSHB shown here.

Its subcellular location is the secreted. Its function is as follows. Together with the alpha chain CGA constitutes follitropin, the follicle-stimulating hormone, and provides its biological specificity to the hormone heterodimer. Binds FSHR, a G protein-coupled receptor, on target cells to activate downstream signaling pathways. Follitropin is involved in follicle development and spermatogenesis in reproductive organs. The polypeptide is Follitropin subunit beta (FSHB) (Meriones unguiculatus (Mongolian jird)).